The primary structure comprises 1044 residues: Diacylglycerol lipase-alpha (1044 aa).

The Cytoplasmic portion of the chain corresponds to methionine 1 to alanine 22. The helical transmembrane segment at isoleucine 23–leucine 43 threads the bilayer. The Extracellular segment spans residues valine 44 to arginine 60. Residues glycine 61–methionine 81 traverse the membrane as a helical segment. Topologically, residues arginine 82–arginine 101 are cytoplasmic. Residues leucine 102–tyrosine 122 traverse the membrane as a helical segment. Residues tyrosine 123–leucine 136 are Extracellular-facing. An N-linked (GlcNAc...) asparagine glycan is attached at asparagine 133. The helical transmembrane segment at glycine 137–phenylalanine 157 threads the bilayer. At aspartate 158–arginine 1044 the chain is on the cytoplasmic side. Active-site charge relay system residues include serine 472 and aspartate 524. Phosphoserine occurs at positions 728, 730, 733, 744, 784, 786, 808, 810, 835, 849, and 954. Residues leucine 848 to glycine 905 are disordered. The disordered stretch occupies residues glutamine 1013–arginine 1044. At threonine 1025 the chain carries Phosphothreonine.

This sequence belongs to the AB hydrolase superfamily. Lipase family. In terms of assembly, interacts (via C-terminal) with CAMK2A; leading to the phosphorylation and inhibition of DAGLA enzymatic activity. Interacts (via PPXXF motif) with HOMER1 and HOMER2; this interaction is required for DAGLA membrane localization. Requires Ca(2+) as cofactor. In terms of processing, phosphorylated at Ser-784 and Ser-810 by CAMK2A; phosphorylation by CAMK2A inhibits diacylglycerol lipase activity.

The protein resides in the cell membrane. It localises to the cell projection. Its subcellular location is the dendritic spine membrane. The protein localises to the postsynaptic density membrane. It is found in the early endosome membrane. The enzyme catalyses a 1,2-diacyl-sn-glycerol + H2O = a 2-acylglycerol + a fatty acid + H(+). It carries out the reaction 1-octadecanoyl-2-(5Z,8Z,11Z,14Z-eicosatetraenoyl)-sn-glycerol + H2O = 2-(5Z,8Z,11Z,14Z-eicosatetraenoyl)-glycerol + octadecanoate + H(+). The catalysed reaction is 1,2-di-(9Z-octadecenoyl)-sn-glycerol + H2O = 2-(9Z-octadecenoyl)-glycerol + (9Z)-octadecenoate + H(+). It catalyses the reaction 1-(9Z-octadecenoyl)-2-(5Z,8Z,11Z,14Z-eicosatetraenoyl)-sn-glycerol + H2O = 2-(5Z,8Z,11Z,14Z-eicosatetraenoyl)-glycerol + (9Z)-octadecenoate + H(+). The enzyme catalyses 1-(9Z-octadecenoyl)-2-octadecanoyl-sn-glycerol + H2O = 2-octadecanoylglycerol + (9Z)-octadecenoate + H(+). It carries out the reaction 1-(9Z-octadecenoyl)-2-(9Z,12Z-octadecadienoyl)-sn-glycerol + H2O = 2-(9Z,12Z-octadecadienoyl)-glycerol + (9Z)-octadecenoate + H(+). The catalysed reaction is 1-(9Z-octadecenoyl)-2-O-(5Z,8Z,11Z,14Z-eicosatetraenyl)-sn-glycerol + H2O = 2-O-(5Z,8Z,11Z,14Z)-eicosatetraenylglycerol + (9Z)-octadecenoate + H(+). Inhibited by 1,2,3-triazole urea covalent inhibitors KT172, DH376 and DO34. Inhibited by p-hydroxy-mercuri-benzoate and HgCl(2), but not to PMSF. Also inhibited by RHC80267. Diacylglycerol lipase activity is inhibited by the phosphorylation of Ser-784 and Ser-810 by CAMK2A. In terms of biological role, serine hydrolase that hydrolyzes arachidonic acid-esterified diacylglycerols (DAGs) to produce the principal endocannabinoid, 2-arachidonoylglycerol (2-AG). Preferentially hydrolyzes sn-1 fatty acids from diacylglycerols (DAG) that contain arachidonic acid (AA) esterified at the sn-2 position to biosynthesize 2-AG. Has negligible activity against other lipids including monoacylglycerols and phospholipids. Plays a key role in regulating 2-AG signaling in the CNS. Controls the activity of 2-AG as a retrograde messenger at neuronal synapses. Supports axonal growth during development and adult neurogenesis. Plays a role for eCB signaling in the physiological regulation of anxiety and depressive behaviors. Also regulates neuroinflammatory responses in the brain, in particular, LPS-induced microglial activation. This chain is Diacylglycerol lipase-alpha (Dagla), found in Rattus norvegicus (Rat).